Reading from the N-terminus, the 649-residue chain is Exolysin (649 aa).

A helical transmembrane segment spans residues 37–57 (LIYTIIVLVVAAVVGLVIFIV). Positions 184–268 (KDIIDNKLRE…KKATDDFKKK (85 aa)) form a coiled coil. Basic and acidic residues predominate over residues 258–275 (AKKATDDFKKKKQADKNK). The interval 258 to 325 (AKKATDDFKK…QFQTRDSKGQ (68 aa)) is disordered. Over residues 278 to 312 (ASKPSPGPKPAPKPSPGPKPAPKPSPGPKPSPGPS) the composition is skewed to pro residues. Residues 407-649 (GGGGGGGNVS…KNVKISKWSP (243 aa)) form a catalytic region.

It depends on Ca(2+) as a cofactor. Mg(2+) is required as a cofactor.

The protein localises to the membrane. It is found in the virion. Inhibited by Mn(2+), Cu(2+), Co(2+), Fe(2+), Zn(2+), Ni(2+), EDTA and EGTA. During viral entry, involved in the degradation of the host cell wall at the site of attachment. This chain is Exolysin, found in Chlorella (PBCV-1).